Here is a 157-residue protein sequence, read N- to C-terminus: Protein Smg homolog (157 aa).

The protein belongs to the Smg family.

This is Protein Smg homolog from Tolumonas auensis (strain DSM 9187 / NBRC 110442 / TA 4).